We begin with the raw amino-acid sequence, 275 residues long: Autophagy protein 5 (275 aa).

Met1 is subject to N-acetylmethionine. Residue Lys130 forms a Glycyl lysine isopeptide (Lys-Gly) (interchain with G-Cter in ATG12) linkage.

This sequence belongs to the ATG5 family. In terms of assembly, forms a conjugate with ATG12. Part of the minor complex composed of 4 sets of ATG12-ATG5 and ATG16L1 (400 kDa); this complex interacts with ATG3 leading to disruption of ATG7 interaction and promotion of ATG8-like proteins lipidation. Forms an 800-kDa complex composed of ATG12-ATG5 and ATG16L2. The ATG12-ATG5 conjugate interacts with RAB33A; this interaction is bridged by ATG16L1 and promotes ATG12-ATG5-ATG16L1 complex recruitment to phagophores. Interacts with TECPR1; the interaction is direct and does not take place when ATG16L1 is associated with the ATG5-ATG12 conjugate. Interacts with DHX58/RIG-1, IFIH1/MDA5 and MAVS/IPS-1 in monomeric form as well as in ATG12-ATG5 conjugate form. The interaction with MAVS is further enhanced upon vesicular stomatitis virus (VSV) infection. Interacts with ATG3. Interacts with ATG7 and ATG10. Interacts with FADD. Interacts with Bassoon/BSN; this interaction is important for the regulation of presynaptic autophagy. Interacts with ATG16L2. In terms of processing, conjugated to ATG12; which is essential for autophagy, but is not required for association with isolation membrane. Acetylated by EP300.

It localises to the cytoplasm. The protein resides in the preautophagosomal structure membrane. Its function is as follows. Involved in autophagic vesicle formation. Conjugation with ATG12, through a ubiquitin-like conjugating system involving ATG7 as an E1-like activating enzyme and ATG10 as an E2-like conjugating enzyme, is essential for its function. The ATG12-ATG5 conjugate acts as an E3-like enzyme which is required for lipidation of ATG8 family proteins and their association to the vesicle membranes. Involved in mitochondrial quality control after oxidative damage, and in subsequent cellular longevity. Plays a critical role in multiple aspects of lymphocyte development and is essential for both B and T lymphocyte survival and proliferation. Required for optimal processing and presentation of antigens for MHC II. Involved in the maintenance of axon morphology and membrane structures, as well as in normal adipocyte differentiation. Promotes primary ciliogenesis through removal of OFD1 from centriolar satellites and degradation of IFT20 via the autophagic pathway. As part of the ATG8 conjugation system with ATG12 and ATG16L1, required for recruitment of LRRK2 to stressed lysosomes and induction of LRRK2 kinase activity in response to lysosomal stress. Functionally, may play an important role in the apoptotic process, possibly within the modified cytoskeleton. Its expression is a relatively late event in the apoptotic process, occurring downstream of caspase activity. Plays a crucial role in IFN-gamma-induced autophagic cell death by interacting with FADD. This Sus scrofa (Pig) protein is Autophagy protein 5.